Here is a 77-residue protein sequence, read N- to C-terminus: Serine protease inhibitor 1 (77 aa).

A signal peptide spans 1 to 17 (MMFTPLIVLTLLVLATA). 5 cysteine pairs are disulfide-bonded: cysteine 21-cysteine 53, cysteine 30-cysteine 48, cysteine 33-cysteine 44, cysteine 37-cysteine 74, and cysteine 55-cysteine 68. The TIL domain maps to 21–74 (CGPNEQWSDCPGCELQCGESDKPCPAMCGDPKCYCSPDQYRRIPDGRCIRKIQC).

It localises to the secreted. Functionally, defends the organism against the host's proteinases. This is Serine protease inhibitor 1 from Anisakis simplex (Herring worm).